We begin with the raw amino-acid sequence, 143 residues long: Nucleoside diphosphate kinase (143 aa).

6 residues coordinate ATP: lysine 11, phenylalanine 59, arginine 87, threonine 93, arginine 104, and asparagine 114. Residue histidine 117 is the Pros-phosphohistidine intermediate of the active site.

It belongs to the NDK family. Homotetramer. Mg(2+) serves as cofactor.

Its subcellular location is the cytoplasm. The catalysed reaction is a 2'-deoxyribonucleoside 5'-diphosphate + ATP = a 2'-deoxyribonucleoside 5'-triphosphate + ADP. The enzyme catalyses a ribonucleoside 5'-diphosphate + ATP = a ribonucleoside 5'-triphosphate + ADP. Major role in the synthesis of nucleoside triphosphates other than ATP. The ATP gamma phosphate is transferred to the NDP beta phosphate via a ping-pong mechanism, using a phosphorylated active-site intermediate. This Escherichia coli O7:K1 (strain IAI39 / ExPEC) protein is Nucleoside diphosphate kinase.